The chain runs to 473 residues: MAKGRVIQVMGPVVDVKFEDGHLPAIYNALKIKHKARNEKEVDIDLTLEVALHLGDDTVRTIAMSTTDGLVRGMEVIDTGAPISVPVGEVTLGRVFNVLGEPIDLGEEIPADARRDAIHRPAPKFEQLSTQVEILETGIKVVDLLAPYIKGGKIGLFGGAGVGKTVLIQELINNIAQEHGGISVFAGVGERTREGNDLYHEMKDSGVINKTAMVFGQMNEPPGARMRVALTGLTMAEYFRDEQGQDVLFFIDNIFRFTQAGSEVSALLGRMPSAVGYQPTLATEMGQLQERITSTAVGSVTSIQAIYVPADDYTDPAPATTFAHLDATTNLERKLSEMGIYPAVDPLASTSRALSPEIVGEEHYQVARKVQQTLQRYKELQDIIAILGMDELSEEDKLVVHRARRIQFFLSQNFHVAEQFTGQPGSYVPVKETVRGFKEILEGKYDHLPEDAFRLVGRIEEVIEKARKMGVEV.

Position 158 to 165 (158 to 165 (GGAGVGKT)) interacts with ATP.

The protein belongs to the ATPase alpha/beta chains family. As to quaternary structure, F-type ATPases have 2 components, CF(1) - the catalytic core - and CF(0) - the membrane proton channel. CF(1) has five subunits: alpha(3), beta(3), gamma(1), delta(1), epsilon(1). CF(0) has three main subunits: a(1), b(2) and c(9-12). The alpha and beta chains form an alternating ring which encloses part of the gamma chain. CF(1) is attached to CF(0) by a central stalk formed by the gamma and epsilon chains, while a peripheral stalk is formed by the delta and b chains.

Its subcellular location is the cell membrane. It catalyses the reaction ATP + H2O + 4 H(+)(in) = ADP + phosphate + 5 H(+)(out). Functionally, produces ATP from ADP in the presence of a proton gradient across the membrane. The catalytic sites are hosted primarily by the beta subunits. This Anoxybacillus flavithermus (strain DSM 21510 / WK1) protein is ATP synthase subunit beta.